We begin with the raw amino-acid sequence, 640 residues long: uncharacterized protein (640 aa).

The interval 594–614 is disordered; the sequence is QCSSDHCKPGSSETLPEATNE.

This is an uncharacterized protein from Rattus norvegicus (Rat).